A 342-amino-acid chain; its full sequence is Type II restriction enzyme CviAII (342 aa).

It catalyses the reaction Endonucleolytic cleavage of DNA to give specific double-stranded fragments with terminal 5'-phosphates.. In terms of biological role, a P subtype restriction enzyme that recognizes the double-stranded sequence 5'-CATG-3' and cleaves after C-1. The polypeptide is Type II restriction enzyme CviAII (CVIAIIR) (Chlorella (PBCV-1)).